Here is a 190-residue protein sequence, read N- to C-terminus: Inosine triphosphate pyrophosphatase (190 aa).

10 to 15 is an ITP binding site; that stretch reads TGNAKK. E40 is a Mg(2+) binding site. ITP is bound by residues K52, 68-69, K85, 144-147, K167, and 172-173; these read DT, FGWD, and HR.

Belongs to the HAM1 NTPase family. In terms of assembly, homodimer. It depends on Mg(2+) as a cofactor. Mn(2+) is required as a cofactor.

The protein resides in the cytoplasm. The enzyme catalyses ITP + H2O = IMP + diphosphate + H(+). It carries out the reaction dITP + H2O = dIMP + diphosphate + H(+). It catalyses the reaction XTP + H2O = XMP + diphosphate + H(+). Functionally, pyrophosphatase that hydrolyzes non-canonical purine nucleotides such as inosine triphosphate (ITP), deoxyinosine triphosphate (dITP) or xanthosine 5'-triphosphate (XTP) to their respective monophosphate derivatives. The enzyme does not distinguish between the deoxy- and ribose forms. Probably excludes non-canonical purines from RNA and DNA precursor pools, thus preventing their incorporation into RNA and DNA and avoiding chromosomal lesions. In Culex quinquefasciatus (Southern house mosquito), this protein is Inosine triphosphate pyrophosphatase.